The primary structure comprises 67 residues: DNA-directed RNA polymerase subunit omega (67 aa).

This sequence belongs to the RNA polymerase subunit omega family. The RNAP catalytic core consists of 2 alpha, 1 beta, 1 beta' and 1 omega subunit. When a sigma factor is associated with the core the holoenzyme is formed, which can initiate transcription.

It catalyses the reaction RNA(n) + a ribonucleoside 5'-triphosphate = RNA(n+1) + diphosphate. Promotes RNA polymerase assembly. Latches the N- and C-terminal regions of the beta' subunit thereby facilitating its interaction with the beta and alpha subunits. The chain is DNA-directed RNA polymerase subunit omega from Polaromonas naphthalenivorans (strain CJ2).